Reading from the N-terminus, the 226-residue chain is Ribonuclease T (226 aa).

Residues 20–194 (VVIDVETAGF…YDTERTAELF (175 aa)) form the Exonuclease domain. Mg(2+)-binding residues include D23, E25, H181, and D186. H181 serves as the catalytic Proton donor/acceptor.

It belongs to the RNase T family. As to quaternary structure, homodimer. Mg(2+) is required as a cofactor.

Functionally, trims short 3' overhangs of a variety of RNA species, leaving a one or two nucleotide 3' overhang. Responsible for the end-turnover of tRNA: specifically removes the terminal AMP residue from uncharged tRNA (tRNA-C-C-A). Also appears to be involved in tRNA biosynthesis. This chain is Ribonuclease T, found in Shewanella denitrificans (strain OS217 / ATCC BAA-1090 / DSM 15013).